We begin with the raw amino-acid sequence, 392 residues long: Phosphopentomutase (392 aa).

Mn(2+)-binding residues include aspartate 10, aspartate 282, histidine 287, aspartate 323, histidine 324, and histidine 335.

Belongs to the phosphopentomutase family. Mn(2+) serves as cofactor.

The protein resides in the cytoplasm. It carries out the reaction 2-deoxy-alpha-D-ribose 1-phosphate = 2-deoxy-D-ribose 5-phosphate. The enzyme catalyses alpha-D-ribose 1-phosphate = D-ribose 5-phosphate. The protein operates within carbohydrate degradation; 2-deoxy-D-ribose 1-phosphate degradation; D-glyceraldehyde 3-phosphate and acetaldehyde from 2-deoxy-alpha-D-ribose 1-phosphate: step 1/2. Functionally, isomerase that catalyzes the conversion of deoxy-ribose 1-phosphate (dRib-1-P) and ribose 1-phosphate (Rib-1-P) to deoxy-ribose 5-phosphate (dRib-5-P) and ribose 5-phosphate (Rib-5-P), respectively. This is Phosphopentomutase from Dictyoglomus thermophilum (strain ATCC 35947 / DSM 3960 / H-6-12).